Here is a 947-residue protein sequence, read N- to C-terminus: DNA mismatch repair protein MutS 2 (947 aa).

The segment at 623–643 (IPNDTHLGSGPVPASRDGSDD) is disordered. 659–666 (GPNMSGKS) contributes to the ATP binding site. A disordered region spans residues 841–916 (AETADTGVEA…GAAAEDELPE (76 aa)).

This sequence belongs to the DNA mismatch repair MutS family.

This protein is involved in the repair of mismatches in DNA. It is possible that it carries out the mismatch recognition step. This protein has a weak ATPase activity. The polypeptide is DNA mismatch repair protein MutS 2 (Haloarcula marismortui (strain ATCC 43049 / DSM 3752 / JCM 8966 / VKM B-1809) (Halobacterium marismortui)).